We begin with the raw amino-acid sequence, 96 residues long: Phosphoribosyl-ATP pyrophosphatase (96 aa).

It belongs to the PRA-PH family.

It is found in the cytoplasm. It catalyses the reaction 1-(5-phospho-beta-D-ribosyl)-ATP + H2O = 1-(5-phospho-beta-D-ribosyl)-5'-AMP + diphosphate + H(+). It functions in the pathway amino-acid biosynthesis; L-histidine biosynthesis; L-histidine from 5-phospho-alpha-D-ribose 1-diphosphate: step 2/9. This chain is Phosphoribosyl-ATP pyrophosphatase, found in Methanobrevibacter smithii (strain ATCC 35061 / DSM 861 / OCM 144 / PS).